The chain runs to 407 residues: Imidazolonepropionase (407 aa).

Histidine 68 and histidine 70 together coordinate Fe(3+). 2 residues coordinate Zn(2+): histidine 68 and histidine 70. 4-imidazolone-5-propanoate contacts are provided by arginine 77, tyrosine 140, and histidine 173. Residue tyrosine 140 coordinates N-formimidoyl-L-glutamate. Position 238 (histidine 238) interacts with Fe(3+). Histidine 238 is a binding site for Zn(2+). Residue glutamine 241 coordinates 4-imidazolone-5-propanoate. Aspartate 313 contacts Fe(3+). Position 313 (aspartate 313) interacts with Zn(2+). The N-formimidoyl-L-glutamate site is built by asparagine 315 and glycine 317. Threonine 318 contributes to the 4-imidazolone-5-propanoate binding site.

It belongs to the metallo-dependent hydrolases superfamily. HutI family. The cofactor is Zn(2+). Fe(3+) serves as cofactor.

The protein resides in the cytoplasm. The catalysed reaction is 4-imidazolone-5-propanoate + H2O = N-formimidoyl-L-glutamate. Its pathway is amino-acid degradation; L-histidine degradation into L-glutamate; N-formimidoyl-L-glutamate from L-histidine: step 3/3. Functionally, catalyzes the hydrolytic cleavage of the carbon-nitrogen bond in imidazolone-5-propanoate to yield N-formimidoyl-L-glutamate. It is the third step in the universal histidine degradation pathway. The chain is Imidazolonepropionase from Burkholderia mallei (strain ATCC 23344).